The following is a 257-amino-acid chain: 5'-nucleotidase SurE (257 aa).

Asp-8, Asp-9, Ser-39, and Asn-87 together coordinate a divalent metal cation. Residues 234 to 257 form a disordered region; that stretch reads VSPLTAPHPTTGHEGLAGLAEKYQ.

Belongs to the SurE nucleotidase family. A divalent metal cation is required as a cofactor.

It is found in the cytoplasm. The catalysed reaction is a ribonucleoside 5'-phosphate + H2O = a ribonucleoside + phosphate. Functionally, nucleotidase that shows phosphatase activity on nucleoside 5'-monophosphates. In Natronomonas pharaonis (strain ATCC 35678 / DSM 2160 / CIP 103997 / JCM 8858 / NBRC 14720 / NCIMB 2260 / Gabara) (Halobacterium pharaonis), this protein is 5'-nucleotidase SurE.